The primary structure comprises 79 residues: Acyl carrier protein (79 aa).

The Carrier domain occupies 2–77 (SEIADKVKKI…DAIDYIEKQK (76 aa)). S37 carries the post-translational modification O-(pantetheine 4'-phosphoryl)serine.

Belongs to the acyl carrier protein (ACP) family. Post-translationally, 4'-phosphopantetheine is transferred from CoA to a specific serine of apo-ACP by AcpS. This modification is essential for activity because fatty acids are bound in thioester linkage to the sulfhydryl of the prosthetic group.

It is found in the cytoplasm. Its pathway is lipid metabolism; fatty acid biosynthesis. Functionally, carrier of the growing fatty acid chain in fatty acid biosynthesis. The polypeptide is Acyl carrier protein (Gluconacetobacter diazotrophicus (strain ATCC 49037 / DSM 5601 / CCUG 37298 / CIP 103539 / LMG 7603 / PAl5)).